A 179-amino-acid polypeptide reads, in one-letter code: MSSRVLTPDVVGIDALVHDHQTVLAKAEGGVVAVFANNAPAFYAVTPARLAELLALEEKLARPGSDVALDDQLYQEPQAAPVAVPMGKFAMYPDWQPDADFIRLAALWGVALRAPVTTEELASFIAYWQAEGKVFHHVQWQQKLARSLQIGRASNGGLPKRDVNTVSEPDSQIPPGFRG.

The disordered stretch occupies residues 156–179; sequence GGLPKRDVNTVSEPDSQIPPGFRG.

It belongs to the DnaT family. Homooligomerizes. Interacts with PriB. Component of the replication restart primosome. Primosome assembly occurs via a 'hand-off' mechanism. PriA binds to replication forks, subsequently PriB then DnaT bind; DnaT then displaces ssDNA to generate the helicase loading substrate.

Involved in the restart of stalled replication forks, which reloads the replicative helicase on sites other than the origin of replication. Can function in multiple replication restart pathways. Displaces ssDNA from a PriB-ssDNA complex. Probably forms a spiral filament on ssDNA. This Escherichia coli O17:K52:H18 (strain UMN026 / ExPEC) protein is Replication restart protein DnaT.